We begin with the raw amino-acid sequence, 631 residues long: ATP-dependent zinc metalloprotease FtsH (631 aa).

Residues 1 to 5 lie on the Cytoplasmic side of the membrane; the sequence is MKKSN. A helical membrane pass occupies residues 6-26; that stretch reads PWFVFFWITLLVIVLMFINFA. Over 27–102 the chain is Periplasmic; it reads RQGGNEVELE…LEFSATEKSG (76 aa). Residues 103-123 traverse the membrane as a helical segment; it reads WLGSLLLNWGPVVLLILFCFW. Over 124–631 the chain is Cytoplasmic; sequence MMRGMSMGNK…KVINEKVIIS (508 aa). Position 196 to 203 (196 to 203) interacts with ATP; it reads GSPGTGKT. H418 is a Zn(2+) binding site. The active site involves E419. H422 and D494 together coordinate Zn(2+).

It in the central section; belongs to the AAA ATPase family. In the C-terminal section; belongs to the peptidase M41 family. As to quaternary structure, homohexamer. Zn(2+) serves as cofactor.

The protein resides in the cell inner membrane. In terms of biological role, acts as a processive, ATP-dependent zinc metallopeptidase for both cytoplasmic and membrane proteins. Plays a role in the quality control of integral membrane proteins. The polypeptide is ATP-dependent zinc metalloprotease FtsH (Endomicrobium trichonymphae).